Consider the following 362-residue polypeptide: Chorismate synthase (362 aa).

Residue Arg-48 coordinates NADP(+). FMN is bound by residues Arg-131–Ser-133, Asn-243–Ala-244, Gly-288, Lys-303–Ser-307, and Arg-329.

Belongs to the chorismate synthase family. Homotetramer. It depends on FMNH2 as a cofactor.

It carries out the reaction 5-O-(1-carboxyvinyl)-3-phosphoshikimate = chorismate + phosphate. It functions in the pathway metabolic intermediate biosynthesis; chorismate biosynthesis; chorismate from D-erythrose 4-phosphate and phosphoenolpyruvate: step 7/7. In terms of biological role, catalyzes the anti-1,4-elimination of the C-3 phosphate and the C-6 proR hydrogen from 5-enolpyruvylshikimate-3-phosphate (EPSP) to yield chorismate, which is the branch point compound that serves as the starting substrate for the three terminal pathways of aromatic amino acid biosynthesis. This reaction introduces a second double bond into the aromatic ring system. The protein is Chorismate synthase of Bartonella tribocorum (strain CIP 105476 / IBS 506).